The sequence spans 250 residues: Golgi SNAP receptor complex member 1 (250 aa).

Ala-2 is subject to N-acetylalanine. At 2–229 (AAGTSSYWED…QRINLRKRRD (228 aa)) the chain is on the cytoplasmic side. Residues 9–30 (WEDLRKQARQLENELDLKLVSF) adopt a coiled-coil conformation. The segment at 38-59 (SHSSTRDGRRDRYSSDTTPLLN) is disordered. The segment covering 41 to 51 (STRDGRRDRYS) has biased composition (basic and acidic residues). The stretch at 68–95 (ETMAIEIEQLLARLTGVNDKMAEYTNSA) forms a coiled coil. The residue at position 141 (Ser-141) is a Phosphoserine. A helical; Anchor for type IV membrane protein membrane pass occupies residues 230–250 (SLILGGVIGICTILLLLYAFH).

The protein belongs to the GOSR1 family. Component of several multiprotein Golgi SNARE complexes. Identified in a SNARE complex with BET1, STX5 and YKT6, in a SNARE complex with BET1L, STX5 and YKT6, in a SNARE complex with STX5, GOSR2, SEC22B and BET1, and in complex with STX5 and COG3. Interacts with GABARAPL2.

It localises to the golgi apparatus membrane. In terms of biological role, involved in transport from the ER to the Golgi apparatus as well as in intra-Golgi transport. It belongs to a super-family of proteins called t-SNAREs or soluble NSF (N-ethylmaleimide-sensitive factor) attachment protein receptor. May play a protective role against hydrogen peroxide induced cytotoxicity under glutathione depleted conditions in neuronal cells by regulating the intracellular ROS levels via inhibition of p38 MAPK (MAPK11, MAPK12, MAPK13 and MAPK14). Participates in docking and fusion stage of ER to cis-Golgi transport. Plays an important physiological role in VLDL-transport vesicle-Golgi fusion and thus in VLDL delivery to the hepatic cis-Golgi. This chain is Golgi SNAP receptor complex member 1 (GOSR1), found in Homo sapiens (Human).